Here is a 143-residue protein sequence, read N- to C-terminus: Anti-sigma F factor (143 aa).

The protein belongs to the anti-sigma-factor family.

The catalysed reaction is L-seryl-[protein] + ATP = O-phospho-L-seryl-[protein] + ADP + H(+). It carries out the reaction L-threonyl-[protein] + ATP = O-phospho-L-threonyl-[protein] + ADP + H(+). Functionally, binds to sigma F and blocks its ability to form an RNA polymerase holoenzyme (E-sigma F). Phosphorylates SpoIIAA on a serine residue. This phosphorylation may enable SpoIIAA to act as an anti-anti-sigma factor that counteracts SpoIIAB and thus releases sigma F from inhibition. The protein is Anti-sigma F factor of Clostridium acetobutylicum (strain ATCC 824 / DSM 792 / JCM 1419 / IAM 19013 / LMG 5710 / NBRC 13948 / NRRL B-527 / VKM B-1787 / 2291 / W).